A 422-amino-acid chain; its full sequence is Steroid hormone receptor ERR1 (422 aa).

The interval 1–67 is disordered; that stretch reads MSSQVVGIEP…GAGPGEQGGG (67 aa). Phosphoserine occurs at positions 19 and 22. Residues 58–67 are compositionally biased toward gly residues; the sequence is GAGPGEQGGG. A DNA-binding region (nuclear receptor) is located at residues 76-151; it reads KRLCLVCGDV…VGMLKEGVRL (76 aa). 2 consecutive NR C4-type zinc fingers follow at residues 79–99 and 115–134; these read CLVCGDVASGYHYGVASCEAC and CPASNECEITKRRRKACQAC. An N6-acetyllysine; by PCAF/KAT2B mark is found at Lys-129, Lys-138, Lys-160, and Lys-162. Glycyl lysine isopeptide (Lys-Gly) (interchain with G-Cter in SUMO2) cross-links involve residues Lys-189 and Lys-402. The NR LBD domain maps to 192 to 420; the sequence is PVNALVSHLL…KLFLEMLEAM (229 aa).

The protein belongs to the nuclear hormone receptor family. NR3 subfamily. In terms of assembly, binds DNA as a monomer or a homodimer. Interacts (via the AF2 domain) with coactivator PPARGC1A (via the L3 motif); the interaction greatly enhances transcriptional activity of genes involved in energy metabolism. Interacts with PIAS4; the interaction enhances sumoylation. Interacts with MAPK15; promotes re-localization of ESRRA to the cytoplasm through a XPO1-dependent mechanism then inhibits ESRRA transcriptional activity. Phosphorylation on Ser-19 enhances sumoylation on Lys-14 increasing repression of transcriptional activity. Post-translationally, sumoylated with SUMO2. Main site is Lys-14 which is enhanced by phosphorylation on Ser-19, cofactor activation, and by interaction with PIAS4. Sumoylation enhances repression of transcriptional activity, but has no effect on subcellular location nor on DNA binding. In terms of processing, reversibly acetylated. Acetylation by PCAF/KAT2 at Lys-129, Lys-138, Lys-160 and Lys-162 and PCAF/KAT2 decreases transcriptional activity probably by inhibiting DNA-binding activity; deacetylation involves SIRT1 and HDAC8 and increases DNA-binding.

The protein resides in the nucleus. The protein localises to the cytoplasm. Its function is as follows. Binds to an ERR-alpha response element (ERRE) containing a single consensus half-site, 5'-TNAAGGTCA-3'. Can bind to the medium-chain acyl coenzyme A dehydrogenase (MCAD) response element NRRE-1 and may act as an important regulator of MCAD promoter. May function as a modulator of the estrogen signaling pathway in the uterus. Induces the expression of PERM1 in the skeletal muscle. The protein is Steroid hormone receptor ERR1 (ESRRA) of Canis lupus familiaris (Dog).